The following is a 346-amino-acid chain: Senescence-specific cysteine protease SAG12 (346 aa).

Positions Met-1–Ser-25 are cleaved as a signal peptide. A glycan (N-linked (GlcNAc...) asparagine) is linked at Asn-124. 3 cysteine pairs are disulfide-bonded: Cys-151/Cys-192, Cys-185/Cys-225, and Cys-283/Cys-335. Residue Cys-154 is part of the active site. His-289 is a catalytic residue. N-linked (GlcNAc...) asparagine glycosylation occurs at Asn-301. Residue Asn-310 is part of the active site.

The protein belongs to the peptidase C1 family. In terms of tissue distribution, found in senescent leaves, especially in senescence-associated vacuoles- (SAVs) containing cells (e.g. mesophyll and guard cells), and in senescencing ovules of unfertilised pistils.

The protein resides in the vacuole. Its function is as follows. Cysteine protease that may have a developmental senescence specific cell death function during apoptosis, heavy metal detoxification, and hypersensitive response. The polypeptide is Senescence-specific cysteine protease SAG12 (Arabidopsis thaliana (Mouse-ear cress)).